Here is a 229-residue protein sequence, read N- to C-terminus: Putative N-acetylmannosamine-6-phosphate 2-epimerase (229 aa).

It belongs to the NanE family.

The catalysed reaction is an N-acyl-D-glucosamine 6-phosphate = an N-acyl-D-mannosamine 6-phosphate. The protein operates within amino-sugar metabolism; N-acetylneuraminate degradation; D-fructose 6-phosphate from N-acetylneuraminate: step 3/5. In terms of biological role, converts N-acetylmannosamine-6-phosphate (ManNAc-6-P) to N-acetylglucosamine-6-phosphate (GlcNAc-6-P). In Actinobacillus pleuropneumoniae serotype 3 (strain JL03), this protein is Putative N-acetylmannosamine-6-phosphate 2-epimerase.